The chain runs to 633 residues: uncharacterized protein (633 aa).

A disordered region spans residues 12 to 43 (ESGTNNYSDTIANGNTLPPRSKKGHSGRRKRS). Residues 13–29 (SGTNNYSDTIANGNTLP) are compositionally biased toward polar residues. Positions 31–42 (RSKKGHSGRRKR) are enriched in basic residues. Helical transmembrane passes span 99 to 118 (ILFG…SSAL) and 217 to 233 (NCAF…ITAC). The segment at 593–612 (DAETNKATGSAKSENIETKS) is disordered.

It localises to the membrane. This is an uncharacterized protein from Saccharomyces cerevisiae (strain ATCC 204508 / S288c) (Baker's yeast).